Consider the following 144-residue polypeptide: Phospholipase A2, membrane associated (144 aa).

Positions 1-20 are cleaved as a signal peptide; the sequence is MKTLLLLAVIMAIGLLQVHG. Disulfide bonds link cysteine 46/cysteine 137, cysteine 48/cysteine 64, cysteine 63/cysteine 117, cysteine 69/cysteine 144, cysteine 70/cysteine 110, cysteine 79/cysteine 103, and cysteine 97/cysteine 108. 3 residues coordinate Ca(2+): tyrosine 47, glycine 49, and serine 51. Residue histidine 67 is part of the active site. Aspartate 68 serves as a coordination point for Ca(2+). Aspartate 111 is an active-site residue.

This sequence belongs to the phospholipase A2 family. It depends on Ca(2+) as a cofactor.

It localises to the secreted. The protein resides in the cell membrane. The protein localises to the mitochondrion outer membrane. The enzyme catalyses a 1,2-diacyl-sn-glycero-3-phosphoethanolamine + H2O = a 1-acyl-sn-glycero-3-phosphoethanolamine + a fatty acid + H(+). The catalysed reaction is 1-hexadecanoyl-2-(9Z-octadecenoyl)-sn-glycero-3-phosphoethanolamine + H2O = 1-hexadecanoyl-sn-glycero-3-phosphoethanolamine + (9Z)-octadecenoate + H(+). It carries out the reaction 1-hexadecanoyl-2-(9Z,12Z-octadecadienoyl)-sn-glycero-3-phosphoethanolamine + H2O = 1-hexadecanoyl-sn-glycero-3-phosphoethanolamine + (9Z,12Z)-octadecadienoate + H(+). It catalyses the reaction 1-hexadecanoyl-2-(5Z,8Z,11Z,14Z-eicosatetraenoyl)-sn-glycero-3-phosphoethanolamine + H2O = 1-hexadecanoyl-sn-glycero-3-phosphoethanolamine + (5Z,8Z,11Z,14Z)-eicosatetraenoate + H(+). The enzyme catalyses N-hexadecanoyl-1,2-di-(9Z-octadecenoyl)-sn-glycero-3-phosphoethanolamine + H2O = N-hexadecanoyl-1-(9Z-octadecenoyl)-sn-glycero-3-phosphoethanolamine + (9Z)-octadecenoate + H(+). The catalysed reaction is 1,2-dihexadecanoyl-sn-glycero-3-phospho-(1'-sn-glycerol) + H2O = 1-hexadecanoyl-sn-glycero-3-phospho-(1'-sn-glycerol) + hexadecanoate + H(+). It carries out the reaction 1-hexadecanoyl-2-(9Z-octadecenoyl)-sn-glycero-3-phosphoglycerol + H2O = 1-hexadecanoyl-sn-glycero-3-phosphoglycerol + (9Z)-octadecenoate + H(+). It catalyses the reaction 1-hexadecanoyl-2-(9Z-octadecenoyl)-sn-glycero-3-phospho-(1'-sn-glycerol) + H2O = 1-hexadecanoyl-sn-glycero-3-phospho-(1'-sn-glycerol) + (9Z)-octadecenoate + H(+). The enzyme catalyses a 1,2-diacyl-sn-glycero-3-phosphocholine + H2O = a 1-acyl-sn-glycero-3-phosphocholine + a fatty acid + H(+). The catalysed reaction is 1,2-dihexadecanoyl-sn-glycero-3-phosphocholine + H2O = 1-hexadecanoyl-sn-glycero-3-phosphocholine + hexadecanoate + H(+). It carries out the reaction 1-hexadecanoyl-2-(9Z-octadecenoyl)-sn-glycero-3-phosphocholine + H2O = 1-hexadecanoyl-sn-glycero-3-phosphocholine + (9Z)-octadecenoate + H(+). It catalyses the reaction 1-hexadecanoyl-2-(9Z,12Z-octadecadienoyl)-sn-glycero-3-phosphocholine + H2O = (9Z,12Z)-octadecadienoate + 1-hexadecanoyl-sn-glycero-3-phosphocholine + H(+). The enzyme catalyses 1-hexadecanoyl-2-(4Z,7Z,10Z,13Z,16Z,19Z-docosahexaenoyl)-sn-glycero-3-phosphocholine + H2O = (4Z,7Z,10Z,13Z,16Z,19Z)-docosahexaenoate + 1-hexadecanoyl-sn-glycero-3-phosphocholine + H(+). Secretory calcium-dependent phospholipase A2 that primarily targets extracellular phospholipids with implications in host antimicrobial defense, inflammatory response and tissue regeneration. Hydrolyzes the ester bond of the fatty acyl group attached at sn-2 position of phospholipids (phospholipase A2 activity) with preference for phosphatidylethanolamines and phosphatidylglycerols over phosphatidylcholines. Contributes to lipid remodeling of cellular membranes and generation of lipid mediators involved in pathogen clearance. Displays bactericidal activity against Gram-positive bacteria by directly hydrolyzing phospholipids of the bacterial membrane. Upon sterile inflammation, targets membrane phospholipids of extracellular mitochondria released from activated platelets, generating free unsaturated fatty acids such as arachidonate that is used by neighboring leukocytes to synthesize inflammatory eicosanoids such as leukotrienes. Simultaneously, by compromising mitochondrial membrane integrity, promotes the release in circulation of potent damage-associated molecular pattern molecules that activate the innate immune response. Plays a stem cell regulator role in the intestinal crypt. Within intracellular compartment mediates Paneth cell differentiation and its stem cell supporting functions by inhibiting Wnt signaling pathway in intestinal stem cell (ICS). Secreted in the intestinal lumen upon inflammation, acts in an autocrine way and promotes prostaglandin E2 synthesis that stimulates Wnt signaling pathway in ICS cells and tissue regeneration. May play a role in the biosynthesis of N-acyl ethanolamines that regulate energy metabolism and inflammation. Hydrolyzes N-acyl phosphatidylethanolamines to N-acyl lysophosphatidylethanolamines, which are further cleaved by a lysophospholipase D to release N-acyl ethanolamines. Independent of its catalytic activity, acts as a ligand for integrins. Binds to and activates integrins ITGAV:ITGB3, ITGA4:ITGB1 and ITGA5:ITGB1. Binds to a site (site 2) which is distinct from the classical ligand-binding site (site 1) and induces integrin conformational changes and enhanced ligand binding to site 1. Induces cell proliferation in an integrin-dependent manner. This Bos taurus (Bovine) protein is Phospholipase A2, membrane associated (PLA2G2A).